Reading from the N-terminus, the 212-residue chain is Adenylate kinase (212 aa).

10 to 15 is an ATP binding site; the sequence is GAGKGT. Positions 30 to 59 are NMP; it reads STGDMFRAAMANQTEMGRLAKSYIDKGELV. Residues T31, R36, 57–59, 86–89, and Q93 each bind AMP; these read ELV and GYPR. The interval 127-159 is LID; the sequence is GRIINRKTGETFHKVFNPPVDYKEEDYYQREDD. ATP contacts are provided by residues R128 and 137-138; that span reads TF. Residues R156 and R167 each contribute to the AMP site. Q195 is an ATP binding site.

The protein belongs to the adenylate kinase family. In terms of assembly, monomer.

It is found in the cytoplasm. It catalyses the reaction AMP + ATP = 2 ADP. It functions in the pathway purine metabolism; AMP biosynthesis via salvage pathway; AMP from ADP: step 1/1. Functionally, catalyzes the reversible transfer of the terminal phosphate group between ATP and AMP. Plays an important role in cellular energy homeostasis and in adenine nucleotide metabolism. The chain is Adenylate kinase from Streptococcus pyogenes serotype M1.